The chain runs to 263 residues: Small ribosomal subunit protein uS2 (263 aa).

The residue at position 2 (serine 2) is an N-acetylserine. A compositionally biased stretch (acidic residues) spans 211 to 242 (EQTAEEEAEAAEGAEFEVEEEEVEQEWQEPAE). The segment at 211–263 (EQTAEEEAEAAEGAEFEVEEEEVEQEWQEPAEADWNASAPPADWNDAANAEAF) is disordered. The span at 246–263 (NASAPPADWNDAANAEAF) shows a compositional bias: low complexity.

Belongs to the universal ribosomal protein uS2 family. As to quaternary structure, component of the small ribosomal subunit. Mature ribosomes consist of a small (40S) and a large (60S) subunit. The 40S subunit contains about 33 different proteins and 1 molecule of RNA (18S). The 60S subunit contains about 49 different proteins and 3 molecules of RNA (25S, 5.8S and 5S). Interacts with RPS21.

It localises to the cytoplasm. Its function is as follows. Required for the assembly and/or stability of the 40S ribosomal subunit. Required for the processing of the 20S rRNA-precursor to mature 18S rRNA in a late step of the maturation of 40S ribosomal subunits. This Komagataella phaffii (strain GS115 / ATCC 20864) (Yeast) protein is Small ribosomal subunit protein uS2.